Consider the following 371-residue polypeptide: MENETNEKLEIKGIPTHEGKYVEYNVLGNFFEVTSKYIPPIQPVGRGAYGMVCCATNSETKEEVAIKKIGNAFENRIDAKRTLREIKLLSHMDHENIIKIKDIVRPPDREEFNDVYIVYELMDTDLHQIIRSSQALTDDHCQYFLYQLLRGLKYVHSANVLHRDLKPSNLLLNANCDLKICDFGLARTTSEADFMTEYVVTRWYRAPELLLNCTEYTAAIDIWSVGCILMELIKREPLFPGRDYAQQLGLIIALLGSPEDSDLGFLRSDNARKYVKHLPRVPRHPFSQKFPDVSPLALDLAERMLVFDPAKRITVEDALNHPFLISLHEINEEPVCDSPFNFDFEQASLSEDDIKELIWNEALKFDPNTMK.

The region spanning 38–324 is the Protein kinase domain; sequence IPPIQPVGRG…VEDALNHPFL (287 aa). Residues 44-52 and K67 each bind ATP; that span reads VGRGAYGMV. The Proton acceptor role is filled by D164. T196 carries the phosphothreonine modification. Positions 196 to 198 match the TXY motif; it reads TEY. Residue Y198 is modified to Phosphotyrosine.

This sequence belongs to the protein kinase superfamily. CMGC Ser/Thr protein kinase family. MAP kinase subfamily. Requires Mg(2+) as cofactor. In terms of processing, dually phosphorylated on Thr-196 and Tyr-198, which activates the enzyme. Very low autophosphorylation, although dramatically increased when Mn(2+) is added to the reaction instead of Mg(2+).

It carries out the reaction L-seryl-[protein] + ATP = O-phospho-L-seryl-[protein] + ADP + H(+). It catalyses the reaction L-threonyl-[protein] + ATP = O-phospho-L-threonyl-[protein] + ADP + H(+). With respect to regulation, activated by tyrosine and threonine phosphorylation. This chain is Mitogen-activated protein kinase homolog NTF6 (NTF6), found in Nicotiana tabacum (Common tobacco).